The sequence spans 313 residues: Dehydrodolichyl diphosphate synthase CPT5, chloroplastic (313 aa).

The transit peptide at 1-42 directs the protein to the chloroplast; that stretch reads MAFSFQLQQVFPFPVKFCSQPKSIKLQIFPNLTKRLPIHPLA. Residue aspartate 89 is part of the active site.

It belongs to the UPP synthase family. It depends on Mg(2+) as a cofactor. In terms of tissue distribution, expressed in leaf trichomes, stem trichomes and old leaves. Expressed at low levels in young leaves and flowers.

The protein resides in the plastid. The protein localises to the chloroplast. The enzyme catalyses n isopentenyl diphosphate + (2E,6E)-farnesyl diphosphate = a di-trans,poly-cis-polyprenyl diphosphate + n diphosphate. Functionally, catalyzes cis-prenyl chain elongation to produce the polyprenyl backbone of dolichol, a glycosyl carrier-lipid required for the biosynthesis of several classes of glycoprotein. The polypeptide is Dehydrodolichyl diphosphate synthase CPT5, chloroplastic (Solanum lycopersicum (Tomato)).